Here is a 157-residue protein sequence, read N- to C-terminus: Acetyltransferase PseH (157 aa).

Residues 5 to 152 (KNFTELNSQE…YHICLKQSDC (148 aa)) form the N-acetyltransferase domain.

Catalyzes the third step in the biosynthesis of pseudaminic acid, a sialic-acid-like sugar that is used to modify flagellin. Mediates N-4 acetylation of UDP-4-amino-4,6-dideoxy-beta-L-AltNAc to form UDP-2,4-diacetamido-2,4,6-trideoxy-beta-L-altropyranose. The protein is Acetyltransferase PseH (pseH) of Campylobacter jejuni subsp. jejuni serotype O:23/36 (strain 81-176).